Consider the following 151-residue polypeptide: MWGDRRISELVEPVVAALGYELVGVERLSSVGKGALLRIYIDTPSGITIDDCERASHQISALLDVEELMASAYTLEISSPGLNRPLFTEEHFKRFTGVEASITLSKPLNGRREFKGLLRGIRGDRVVILVAGEEFELPLEGIKKARLVPEC.

This sequence belongs to the RimP family.

The protein resides in the cytoplasm. Required for maturation of 30S ribosomal subunits. This Nitrosococcus oceani (strain ATCC 19707 / BCRC 17464 / JCM 30415 / NCIMB 11848 / C-107) protein is Ribosome maturation factor RimP.